The primary structure comprises 144 residues: uncharacterized protein (144 aa).

Residues 4–111 (VFCAIIAGEA…LPPRNGDKLS (108 aa)) form the HIT domain. A Histidine triad motif motif is present at residues 96–100 (HVHLH).

This is an uncharacterized protein from Mycobacterium tuberculosis (strain CDC 1551 / Oshkosh).